A 455-amino-acid chain; its full sequence is MALWGGRFQGETSALFKLFNDSLPVDYRLFEQDVVGSIAWADAIASVGIITATECSDLKKALNDLLVEVNGDPAIILASGAEDIHSFVESALIAKVGDLGKKLHTGRSRNDQVATDLKLWCQSEGAALLARLHSLHAELLALAEREFDAVMPGYTHLQRAQPVTFGHWCLAYVEMYERDISRLADALTRANTCPLGSGALAGTAYKMDRHALAAALNFAAPTLNSLDSVSDRDHVVELCSTASISMMHLSRMAEDLIFFNSGEANFISLSDEVTSGSSLMPQKKNPDALELIRGKTGRVYGSLVGILTTMKALPLAYNKDMQEDKEGLFDVVDSWAICLDMAALVLSGLKVNRPNALLAAQQGYANSTELADYLVSKGMPFREAHHVVGEVVVAAIAKQIPLEDFSLAELKTFAAIIEDDVYPNLTIEACLAKRDVLGGTALPQIQQAIAAKKAR.

The protein belongs to the lyase 1 family. Argininosuccinate lyase subfamily.

It localises to the cytoplasm. It catalyses the reaction 2-(N(omega)-L-arginino)succinate = fumarate + L-arginine. It participates in amino-acid biosynthesis; L-arginine biosynthesis; L-arginine from L-ornithine and carbamoyl phosphate: step 3/3. The polypeptide is Argininosuccinate lyase (Shewanella baltica (strain OS185)).